A 74-amino-acid polypeptide reads, in one-letter code: uncharacterized protein (74 aa).

Basic and acidic residues-rich tracts occupy residues 1 to 13 and 20 to 60; these read MKKQ…HQLK and IKAK…KSFE. The disordered stretch occupies residues 1 to 74; the sequence is MKKQKSIDKH…ESQMDWHQYK (74 aa). Positions 64–74 are enriched in polar residues; sequence NESQMDWHQYK.

This is an uncharacterized protein from Bacillus subtilis (strain 168).